A 434-amino-acid chain; its full sequence is Glutamate-1-semialdehyde 2,1-aminomutase (434 aa).

The residue at position 270 (lysine 270) is an N6-(pyridoxal phosphate)lysine.

The protein belongs to the class-III pyridoxal-phosphate-dependent aminotransferase family. HemL subfamily. In terms of assembly, homodimer. Pyridoxal 5'-phosphate is required as a cofactor.

It is found in the cytoplasm. The enzyme catalyses (S)-4-amino-5-oxopentanoate = 5-aminolevulinate. The protein operates within porphyrin-containing compound metabolism; protoporphyrin-IX biosynthesis; 5-aminolevulinate from L-glutamyl-tRNA(Glu): step 2/2. This Pelotomaculum thermopropionicum (strain DSM 13744 / JCM 10971 / SI) protein is Glutamate-1-semialdehyde 2,1-aminomutase.